We begin with the raw amino-acid sequence, 90 residues long: Phosphocarrier protein HPr (90 aa).

The HPr domain occupies 1-89; that stretch reads MPAREITIIN…ELINNFFDEG (89 aa). His-15 acts as the Pros-phosphohistidine intermediate in catalysis.

It belongs to the HPr family.

The protein localises to the cytoplasm. Its function is as follows. General (non sugar-specific) component of the phosphoenolpyruvate-dependent sugar phosphotransferase system (sugar PTS). This major carbohydrate active-transport system catalyzes the phosphorylation of incoming sugar substrates concomitantly with their translocation across the cell membrane. The phosphoryl group from phosphoenolpyruvate (PEP) is transferred to the phosphoryl carrier protein HPr by enzyme I. Phospho-HPr then transfers it to the PTS EIIA domain. The polypeptide is Phosphocarrier protein HPr (ptsH) (Pseudomonas putida (Arthrobacter siderocapsulatus)).